The chain runs to 220 residues: Iron-sulfur cluster repair protein YtfE (220 aa).

It belongs to the RIC family. YtfE subfamily. As to quaternary structure, homodimer.

It is found in the cytoplasm. Its function is as follows. Di-iron-containing protein involved in the repair of iron-sulfur clusters damaged by oxidative and nitrosative stress conditions. This Escherichia coli O157:H7 protein is Iron-sulfur cluster repair protein YtfE.